A 180-amino-acid polypeptide reads, in one-letter code: MGIDISHRNKRKVVRRNPKSGDVYLRLMVKLYKFLARRTHSKFNNIVKRRLFMSRINRAPLSLSRLTRQMKKPGREGKIAVVIGTVTNDIRMREVPKLTVCALRVTAGARTRILKAGGKVMTVDQLALKAPLGKGTVLLQGPRKAREACRHFGPAPGVPGSHTKPYVISKSRERTNAHRA.

Residues 152–180 (FGPAPGVPGSHTKPYVISKSRERTNAHRA) are disordered. Over residues 170–180 (KSRERTNAHRA) the composition is skewed to basic and acidic residues.

The protein belongs to the eukaryotic ribosomal protein eL18 family.

It localises to the cytoplasm. The protein is Large ribosomal subunit protein eL18 (RPL18) of Taenia asiatica (Asian tapeworm).